A 275-amino-acid chain; its full sequence is 3-methyl-2-oxobutanoate hydroxymethyltransferase (275 aa).

Mg(2+)-binding residues include D55 and D94. 3-methyl-2-oxobutanoate-binding positions include 55-56 (DS), D94, and K122. A Mg(2+)-binding site is contributed by E124. E191 acts as the Proton acceptor in catalysis.

This sequence belongs to the PanB family. Homodecamer; pentamer of dimers. It depends on Mg(2+) as a cofactor.

Its subcellular location is the cytoplasm. It catalyses the reaction 3-methyl-2-oxobutanoate + (6R)-5,10-methylene-5,6,7,8-tetrahydrofolate + H2O = 2-dehydropantoate + (6S)-5,6,7,8-tetrahydrofolate. It functions in the pathway cofactor biosynthesis; (R)-pantothenate biosynthesis; (R)-pantoate from 3-methyl-2-oxobutanoate: step 1/2. In terms of biological role, catalyzes the reversible reaction in which hydroxymethyl group from 5,10-methylenetetrahydrofolate is transferred onto alpha-ketoisovalerate to form ketopantoate. This is 3-methyl-2-oxobutanoate hydroxymethyltransferase from Marinomonas sp. (strain MWYL1).